The following is a 384-amino-acid chain: dTDP-dihydrostreptose--streptidine-6-phosphate dihydrostreptosyltransferase (384 aa).

It catalyses the reaction dTDP-L-dihydrostreptose + streptidine 6-phosphate = O-(1-&gt;4)-alpha-L-dihydrostreptosyl-streptidine 6-phosphate + dTDP + H(+). Its pathway is antibiotic biosynthesis; streptomycin biosynthesis. Its function is as follows. Is probably a dihydrostreptosyl glycosyltransferase, involved in the first glycosylation step condensing streptidine-6-phosphate and dihydrostreptose. This is dTDP-dihydrostreptose--streptidine-6-phosphate dihydrostreptosyltransferase (strH) from Streptomyces griseus.